A 259-amino-acid chain; its full sequence is Proteasome subunit alpha (259 aa).

It belongs to the peptidase T1A family. As to quaternary structure, the 20S proteasome core is composed of 14 alpha and 14 beta subunits that assemble into four stacked heptameric rings, resulting in a barrel-shaped structure. The two inner rings, each composed of seven catalytic beta subunits, are sandwiched by two outer rings, each composed of seven alpha subunits. The catalytic chamber with the active sites is on the inside of the barrel. Has a gated structure, the ends of the cylinder being occluded by the N-termini of the alpha-subunits. Is capped at one or both ends by the proteasome regulatory ATPase, PAN.

It localises to the cytoplasm. With respect to regulation, the formation of the proteasomal ATPase PAN-20S proteasome complex, via the docking of the C-termini of PAN into the intersubunit pockets in the alpha-rings, triggers opening of the gate for substrate entry. Interconversion between the open-gate and close-gate conformations leads to a dynamic regulation of the 20S proteasome proteolysis activity. Functionally, component of the proteasome core, a large protease complex with broad specificity involved in protein degradation. The sequence is that of Proteasome subunit alpha from Methanococcus maripaludis (strain C6 / ATCC BAA-1332).